We begin with the raw amino-acid sequence, 180 residues long: Ribulose bisphosphate carboxylase small subunit, chloroplastic (180 aa).

A chloroplast-targeting transit peptide spans 1–56 (MASSIMSSAAVATRSNGAQASMVAPFTGLKSNASFPVSRKTNLDITSIASNGGRVR).

Belongs to the RuBisCO small chain family. As to quaternary structure, heterohexadecamer of 8 large and 8 small subunits.

Its subcellular location is the plastid. It is found in the chloroplast. Functionally, ruBisCO catalyzes two reactions: the carboxylation of D-ribulose 1,5-bisphosphate, the primary event in carbon dioxide fixation, as well as the oxidative fragmentation of the pentose substrate. Both reactions occur simultaneously and in competition at the same active site. Although the small subunit is not catalytic it is essential for maximal activity. The protein is Ribulose bisphosphate carboxylase small subunit, chloroplastic of Stellaria longipes (Longstalk starwort).